We begin with the raw amino-acid sequence, 414 residues long: Serine hydroxymethyltransferase (414 aa).

(6S)-5,6,7,8-tetrahydrofolate contacts are provided by residues L121 and 125-127 (GHL). K229 is subject to N6-(pyridoxal phosphate)lysine.

It belongs to the SHMT family. Homodimer. It depends on pyridoxal 5'-phosphate as a cofactor.

The protein localises to the cytoplasm. The catalysed reaction is (6R)-5,10-methylene-5,6,7,8-tetrahydrofolate + glycine + H2O = (6S)-5,6,7,8-tetrahydrofolate + L-serine. It functions in the pathway one-carbon metabolism; tetrahydrofolate interconversion. The protein operates within amino-acid biosynthesis; glycine biosynthesis; glycine from L-serine: step 1/1. Functionally, catalyzes the reversible interconversion of serine and glycine with tetrahydrofolate (THF) serving as the one-carbon carrier. This reaction serves as the major source of one-carbon groups required for the biosynthesis of purines, thymidylate, methionine, and other important biomolecules. Also exhibits THF-independent aldolase activity toward beta-hydroxyamino acids, producing glycine and aldehydes, via a retro-aldol mechanism. This Janthinobacterium sp. (strain Marseille) (Minibacterium massiliensis) protein is Serine hydroxymethyltransferase.